Consider the following 220-residue polypeptide: Small ribosomal subunit protein uS3c (220 aa).

Positions 39-120 (IRDFIKNYVK…KLIIDIIRIT (82 aa)) constitute a KH type-2 domain.

It belongs to the universal ribosomal protein uS3 family. As to quaternary structure, part of the 30S ribosomal subunit.

It is found in the plastid. This is Small ribosomal subunit protein uS3c (rps3) from Epifagus virginiana (Beechdrops).